A 652-amino-acid polypeptide reads, in one-letter code: Interferon-induced GTP-binding protein Mx1 (652 aa).

The segment at 1 to 27 is disordered; it reads MKERTSACRHGTPQKHPDTSEESQAME. Residues 58–331 enclose the Dynamin-type G domain; that stretch reads DLALPAIAVI…LTSHICKSLP (274 aa). The segment at 68–75 is G1 motif; sequence GDQSSGKS. 68–75 is a binding site for GTP; that stretch reads GDQSSGKS. A G2 motif region spans residues 93–95; it reads VTR. Residues 169 to 172 form a G3 motif region; it reads DLPG. GTP contacts are provided by residues 169-173 and 238-241; these read DLPGI and TKPD. The segment at 238–241 is G4 motif; the sequence is TKPD. The interval 270 to 273 is G5 motif; sequence KCRG. The interval 332-357 is bundle signaling element (BSE); that stretch reads ILENQINVNHQIASEELQKYGADIPE. The middle domain stretch occupies residues 357–526; the sequence is EDDSKRLSFL…HFQMEHIVYC (170 aa). Residues 358-622 form a stalk region; it reads DDSKRLSFLM…TSKCNWFLTE (265 aa). One can recognise a GED domain in the interval 564–652; the sequence is TTEMTQHLNA…AQRKLAKFSN (89 aa).

It belongs to the TRAFAC class dynamin-like GTPase superfamily. Dynamin/Fzo/YdjA family. As to quaternary structure, homooligomer. Oligomerizes into multimeric filamentous or ring-like structures by virtue of its stalk domain. Oligomerization is critical for GTPase activity, protein stability, and recognition of viral target structures. Interacts with TRPC1, TRPC3, TRPC4, TRPC5, TRPC6 and TRPC7. Interacts with HSPA5. Interacts with TUBB/TUBB5. Interacts with DDX39A and DDX39B. In terms of processing, ISGylated.

It is found in the nucleus. The protein resides in the cytoplasm. It localises to the endoplasmic reticulum membrane. The protein localises to the perinuclear region. Interferon-induced dynamin-like GTPase which has antiviral activity against influenza A virus, (IAV) and Thogoto virus (THOV). Inhibits IAV by interfering with the process of primary transcription, probably by affecting the viral polymerase function. The chain is Interferon-induced GTP-binding protein Mx1 (Mx1) from Rattus norvegicus (Rat).